We begin with the raw amino-acid sequence, 270 residues long: uncharacterized protein (270 aa).

Positions Arg-166 to Phe-186 are disordered.

This is an uncharacterized protein from Ostreid herpesvirus 1 (isolate France) (OsHV-1).